Consider the following 171-residue polypeptide: Large ribosomal subunit protein uL10 (171 aa).

This sequence belongs to the universal ribosomal protein uL10 family. Part of the ribosomal stalk of the 50S ribosomal subunit. The N-terminus interacts with L11 and the large rRNA to form the base of the stalk. The C-terminus forms an elongated spine to which L12 dimers bind in a sequential fashion forming a multimeric L10(L12)X complex.

In terms of biological role, forms part of the ribosomal stalk, playing a central role in the interaction of the ribosome with GTP-bound translation factors. This Phenylobacterium zucineum (strain HLK1) protein is Large ribosomal subunit protein uL10.